The following is a 451-amino-acid chain: Bifunctional protein GlmU (451 aa).

Residues 1–230 are pyrophosphorylase; the sequence is MNNPIAAIVL…PADVGGINSR (230 aa). Residues 10–13, lysine 24, glutamine 74, 79–80, 102–104, glycine 142, glutamate 156, asparagine 171, and asparagine 228 each bind UDP-N-acetyl-alpha-D-glucosamine; these read LAAG, GT, and YGD. Aspartate 104 contributes to the Mg(2+) binding site. Asparagine 228 lines the Mg(2+) pocket. The interval 231–251 is linker; sequence AELAAAEAQWQAFRREEAMAA. Positions 252–451 are N-acetyltransferase; it reads GASLRAPETV…RKKKAAEQKK (200 aa). Arginine 317 and lysine 335 together coordinate UDP-N-acetyl-alpha-D-glucosamine. The active-site Proton acceptor is histidine 347. 2 residues coordinate UDP-N-acetyl-alpha-D-glucosamine: tyrosine 350 and asparagine 361. Residues alanine 364, 370–371, serine 389, alanine 407, and arginine 424 contribute to the acetyl-CoA site; that span reads NY.

The protein in the N-terminal section; belongs to the N-acetylglucosamine-1-phosphate uridyltransferase family. In the C-terminal section; belongs to the transferase hexapeptide repeat family. Homotrimer. Mg(2+) is required as a cofactor.

The protein localises to the cytoplasm. The enzyme catalyses alpha-D-glucosamine 1-phosphate + acetyl-CoA = N-acetyl-alpha-D-glucosamine 1-phosphate + CoA + H(+). It catalyses the reaction N-acetyl-alpha-D-glucosamine 1-phosphate + UTP + H(+) = UDP-N-acetyl-alpha-D-glucosamine + diphosphate. It functions in the pathway nucleotide-sugar biosynthesis; UDP-N-acetyl-alpha-D-glucosamine biosynthesis; N-acetyl-alpha-D-glucosamine 1-phosphate from alpha-D-glucosamine 6-phosphate (route II): step 2/2. The protein operates within nucleotide-sugar biosynthesis; UDP-N-acetyl-alpha-D-glucosamine biosynthesis; UDP-N-acetyl-alpha-D-glucosamine from N-acetyl-alpha-D-glucosamine 1-phosphate: step 1/1. It participates in bacterial outer membrane biogenesis; LPS lipid A biosynthesis. Functionally, catalyzes the last two sequential reactions in the de novo biosynthetic pathway for UDP-N-acetylglucosamine (UDP-GlcNAc). The C-terminal domain catalyzes the transfer of acetyl group from acetyl coenzyme A to glucosamine-1-phosphate (GlcN-1-P) to produce N-acetylglucosamine-1-phosphate (GlcNAc-1-P), which is converted into UDP-GlcNAc by the transfer of uridine 5-monophosphate (from uridine 5-triphosphate), a reaction catalyzed by the N-terminal domain. In Sphingopyxis alaskensis (strain DSM 13593 / LMG 18877 / RB2256) (Sphingomonas alaskensis), this protein is Bifunctional protein GlmU.